Here is a 391-residue protein sequence, read N- to C-terminus: Multidrug resistance protein MdtL (391 aa).

At 1–3 (MSR) the chain is on the cytoplasmic side. Residues 4 to 24 (FLICSFALVLLYPAGIDMYLV) traverse the membrane as a helical segment. Residues 25-41 (GLPRIAADLNASEAQLH) lie on the Periplasmic side of the membrane. The chain crosses the membrane as a helical span at residues 42 to 62 (IAFSVYLAGMAAAMLFAGKVA). At 63 to 68 (DRSGRK) the chain is on the cytoplasmic side. The chain crosses the membrane as a helical span at residues 69-89 (PVAIPGAALFIITSVFCSLAE). The Periplasmic segment spans residues 90 to 92 (TST). The helical transmembrane segment at 93–113 (LFLAGRFLQGLGAGCCYVVAF) threads the bilayer. Residues 114–130 (AILRDTLDDRRRAKVLS) are Cytoplasmic-facing. Residues 131–151 (LLNGITCIIPVLAPVLGHLIM) traverse the membrane as a helical segment. The Periplasmic portion of the chain corresponds to 152 to 157 (LKFPWQ). Residues 158 to 178 (SLFWTMAIMGIAVLMLSLFIL) traverse the membrane as a helical segment. Residues 179–198 (KETRPAAPAASDKSRENSES) are Cytoplasmic-facing. A helical transmembrane segment spans residues 199-221 (LLNRFFLSRVVITTLSVSVILTF). The Periplasmic segment spans residues 222–244 (VNTSPVLLMEIMGFERGEYATIM). Residues 245–265 (ALTAGVSMTVSFSTPFALGIF) traverse the membrane as a helical segment. Residues 266–268 (KPR) are Cytoplasmic-facing. The chain crosses the membrane as a helical span at residues 269-289 (TLMITSQVLFLAAGITLTVSP). The Periplasmic portion of the chain corresponds to 290–292 (SHA). A helical membrane pass occupies residues 293-313 (VSLFGITLICAGFSVGFGVAM). At 314–330 (SQALGPFSLRAGVASST) the chain is on the cytoplasmic side. Residues 331 to 351 (LGIAQVCGSSLWIWLAAVVGI) traverse the membrane as a helical segment. The Periplasmic segment spans residues 352–355 (SAWN). A helical transmembrane segment spans residues 356 to 376 (MLIGILIACSIVSLLLIMFVA). Residues 377–391 (PGRPVTAHEEIHHHA) lie on the Cytoplasmic side of the membrane.

The protein belongs to the major facilitator superfamily. DHA1 family. MdtL (TC 2.A.1.2.22) subfamily.

Its subcellular location is the cell inner membrane. In terms of biological role, confers resistance to chloramphenicol. In Escherichia coli O157:H7, this protein is Multidrug resistance protein MdtL (mdtL).